We begin with the raw amino-acid sequence, 357 residues long: MNENPAANKIFNEVSSLYKQYFEYAIKVRKWLEIPDDLPHREIGYGMLKKVDNRNISFNTEGEYLTWVLKESPFHLYKSLSYMEYPDLVGGAAKKGLFKREVAFDIDTHKTEKCTHDDSWICEECLGEARNQVLILIEDFLFPDFGLSEKDLKIVFTGNRGYHIYLKPEDPELLKKIEKWGKNERRYFIEYILGKNLNLRNMGSRWKNILISEFKKNKIATKKFEKNSDWKTEIDTRKDTTRRKIYETIDKVKSRLELDEKVMDDDIRLLRTIGSLHGYTGLMVKEITYSSLKSNQFDPLNHGVFSKFHKIMYNVNIKQEIDPLTLKGDTFNHKSTEIPASYLLFLFGHGIDFEILE.

Residues Asp-105, Asp-107, and Asp-259 contribute to the active site.

The protein belongs to the eukaryotic-type primase small subunit family. As to quaternary structure, heterodimer of a small subunit (PriS) and a large subunit (PriL). Mg(2+) is required as a cofactor. It depends on Mn(2+) as a cofactor.

Its function is as follows. Catalytic subunit of DNA primase, an RNA polymerase that catalyzes the synthesis of short RNA molecules used as primers for DNA polymerase during DNA replication. The small subunit contains the primase catalytic core and has DNA synthesis activity on its own. Binding to the large subunit stabilizes and modulates the activity, increasing the rate of DNA synthesis while decreasing the length of the DNA fragments, and conferring RNA synthesis capability. The DNA polymerase activity may enable DNA primase to also catalyze primer extension after primer synthesis. May also play a role in DNA repair. The chain is DNA primase small subunit PriS from Methanococcus maripaludis (strain C5 / ATCC BAA-1333).